The following is a 594-amino-acid chain: Maternal effect protein oskar (594 aa).

Low complexity predominate over residues 44–62; the sequence is QQQPKQQQQQQQHQSQHQH. The disordered stretch occupies residues 44 to 68; the sequence is QQQPKQQQQQQQHQSQHQHQQQKQK. In terms of domain architecture, HTH OST-type spans 174–243; sequence EYPDIDTEIR…SGKRIFNIKP (70 aa).

As to quaternary structure, interacts with smaug (smg). In terms of tissue distribution, posterior pole of the oocyte.

Functionally, organizes the germ plasm and directs localization of the posterior determinant nanos. Oskar protein is required to keep oskar RNA and staufen protein at the posterior pole. This Drosophila virilis (Fruit fly) protein is Maternal effect protein oskar (osk).